We begin with the raw amino-acid sequence, 2244 residues long: Multifunctional protein ura1 (2244 aa).

The GATase (Glutamine amidotransferase) stretch occupies residues 1-437 (MSGLLPSLSS…GPRDTEFLFD (437 aa)). Residues 16 to 44 (QSEALGMPRTHGPKPSENDPKEPTCSPSP) form a disordered region. L-glutamine-binding residues include Ser-101, Gly-309, and Gly-311. The Glutamine amidotransferase type-1 domain occupies 264–449 (RILVIDVGMK…IDVVKRSADA (186 aa)). Residue Cys-338 is the Nucleophile; for GATase activity of the active site. Gln-342, Asn-380, Gly-382, and Tyr-383 together coordinate L-glutamine. Catalysis depends on for GATase activity residues His-422 and Glu-424. Positions 438–477 (VFIDVVKRSADAKSLQPFKLPGGTIEENRSRHPLVDAKRV) are linker. A CPSase A region spans residues 478 to 1014 (LILGSGGLSI…VEHDIHFNDK (537 aa)). The segment at 478–1514 (LILGSGGLSI…TNVKCAKLMI (1037 aa)) is CPSase (Carbamoyl phosphate synthase). ATP-binding residues include Arg-594, Arg-634, Gly-640, Gly-641, Arg-671, Met-673, Glu-678, Gly-704, Ile-705, His-706, Gln-747, and Glu-761. The 193-residue stretch at 598–790 (ARAMDEINEK…LAFTAAKLGL (193 aa)) folds into the ATP-grasp 1 domain. 3 residues coordinate Mg(2+): Gln-747, Glu-761, and Asn-763. Mn(2+) contacts are provided by Gln-747, Glu-761, and Asn-763. The CPSase B stretch occupies residues 1015–1514 (GVMVLGSGVY…TNVKCAKLMI (500 aa)). At Ser-1119 the chain carries Phosphoserine. The ATP-grasp 2 domain maps to 1133–1324 (SRMLDDIGVD…MISMATDVIM (192 aa)). The ATP site is built by Arg-1169, Lys-1208, Ile-1210, Glu-1215, Gly-1240, Val-1241, His-1242, Ser-1243, Gln-1283, and Glu-1295. Residues Gln-1283, Glu-1295, and Asn-1297 each contribute to the Mg(2+) site. Residues Gln-1283, Glu-1295, and Asn-1297 each contribute to the Mn(2+) site. In terms of domain architecture, MGS-like spans 1390 to 1552 (FRLPKKNILI…INISAFLPEF (163 aa)). The linker stretch occupies residues 1515–1524 (EAICRNLDFS). Residues 1525–1853 (LSTVDFQSSF…FDGHDVFFDG (329 aa)) form a defective DHOase domain region. The tract at residues 1854–1935 (ELNFEHTYGR…VQLINSSPFY (82 aa)) is linker. Phosphoserine occurs at positions 1881 and 1885. The tract at residues 1936–2244 (RKHIISVHQV…CVMGATEVAN (309 aa)) is ATCase (Aspartate transcarbamylase). 2 residues coordinate carbamoyl phosphate: Arg-1988 and Thr-1989. Lys-2016 lines the L-aspartate pocket. Residues Arg-2037, His-2065, and Gln-2068 each coordinate carbamoyl phosphate. Positions 2098 and 2160 each coordinate L-aspartate. Residues Leu-2199 and Pro-2200 each contribute to the carbamoyl phosphate site.

The protein in the N-terminal section; belongs to the CarA family. It in the 2nd section; belongs to the CarB family. This sequence in the 3rd section; belongs to the metallo-dependent hydrolases superfamily. DHOase family. CAD subfamily. In the C-terminal section; belongs to the aspartate/ornithine carbamoyltransferase superfamily. ATCase family. Mg(2+) serves as cofactor. Mn(2+) is required as a cofactor.

The enzyme catalyses hydrogencarbonate + L-glutamine + 2 ATP + H2O = carbamoyl phosphate + L-glutamate + 2 ADP + phosphate + 2 H(+). The catalysed reaction is L-glutamine + H2O = L-glutamate + NH4(+). It catalyses the reaction hydrogencarbonate + NH4(+) + 2 ATP = carbamoyl phosphate + 2 ADP + phosphate + 2 H(+). It carries out the reaction carbamoyl phosphate + L-aspartate = N-carbamoyl-L-aspartate + phosphate + H(+). The protein operates within pyrimidine metabolism; UMP biosynthesis via de novo pathway; (S)-dihydroorotate from bicarbonate: step 1/3. It participates in pyrimidine metabolism; UMP biosynthesis via de novo pathway; (S)-dihydroorotate from bicarbonate: step 2/3. With respect to regulation, both CPSase and ATCase activities are feedback inhibited by the end product UTP. In terms of biological role, multifunctional protein that encodes the first 2 enzymatic activities of the de novo pyrimidine pathway: carbamoylphosphate synthetase (CPSase; EC 6.3.5.5) and aspartate transcarbamylase (ATCase; EC 2.1.3.2). The CPSase-function is accomplished in 2 steps, by a glutamine-dependent amidotransferase activity (GATase) that binds and cleaves glutamine to produce ammonia, followed by an ammonium-dependent carbamoyl phosphate synthetase, which reacts with the ammonia, hydrogencarbonate and ATP to form carbamoyl phosphate. The endogenously produced carbamoyl phosphate is sequestered and channeled to the ATCase active site. ATCase then catalyzes the formation of carbamoyl-L-aspartate from L-aspartate and carbamoyl phosphate. The chain is Multifunctional protein ura1 (ura1) from Schizosaccharomyces pombe (strain 972 / ATCC 24843) (Fission yeast).